The primary structure comprises 557 residues: Formate--tetrahydrofolate ligase (557 aa).

66–73 contributes to the ATP binding site; that stretch reads TPAGEGKS.

It belongs to the formate--tetrahydrofolate ligase family.

The enzyme catalyses (6S)-5,6,7,8-tetrahydrofolate + formate + ATP = (6R)-10-formyltetrahydrofolate + ADP + phosphate. Its pathway is one-carbon metabolism; tetrahydrofolate interconversion. The sequence is that of Formate--tetrahydrofolate ligase from Clostridium botulinum (strain Kyoto / Type A2).